The primary structure comprises 319 residues: MAGPGLEFENEIADLEEQIASLERNTDRSEEIDSAIRSLRLARVAKLKETYSSLDPWQTVQVARHKNRPYTRDYLNLAFDEFVELHGDKHFGDDRAMLSGFAKLDRFKVMVIGHQKGRTYKERAACHFGCAHPEGYRKAMVKMKMAEKYRLPVICFIDTPGAYPGIGAEERGQAQVIAESMFMMSDLKTPVICVVIGEGGSGGALGIGVGDRVAVLQHAYYSVISPEGCAGILWKSHEHAPKAAAALRFTSDHLLRLGVVDDVLEEPLGGAHRDHHQMATRMKTYLSRQLSELEEMPVDLMLEQRYEKFRKLGVFLEES.

In terms of domain architecture, CoA carboxyltransferase C-terminal spans 31 to 292; sequence EIDSAIRSLR…KTYLSRQLSE (262 aa).

The protein belongs to the AccA family. As to quaternary structure, acetyl-CoA carboxylase is a heterohexamer composed of biotin carboxyl carrier protein (AccB), biotin carboxylase (AccC) and two subunits each of ACCase subunit alpha (AccA) and ACCase subunit beta (AccD).

The protein localises to the cytoplasm. The catalysed reaction is N(6)-carboxybiotinyl-L-lysyl-[protein] + acetyl-CoA = N(6)-biotinyl-L-lysyl-[protein] + malonyl-CoA. It participates in lipid metabolism; malonyl-CoA biosynthesis; malonyl-CoA from acetyl-CoA: step 1/1. Component of the acetyl coenzyme A carboxylase (ACC) complex. First, biotin carboxylase catalyzes the carboxylation of biotin on its carrier protein (BCCP) and then the CO(2) group is transferred by the carboxyltransferase to acetyl-CoA to form malonyl-CoA. This chain is Acetyl-coenzyme A carboxylase carboxyl transferase subunit alpha, found in Rhodopirellula baltica (strain DSM 10527 / NCIMB 13988 / SH1).